We begin with the raw amino-acid sequence, 1483 residues long: Neuropathy target esterase sws (1483 aa).

Residues 1–34 (MDVLELLRASANGCYNTLFSDAWFQYVSKQIATT) are Lumenal-facing. The chain crosses the membrane as a helical span at residues 35-55 (MYWYGALLVIGVLFIAWFLYF). The Cytoplasmic segment spans residues 56–1483 (KRLARLRLRD…ENLTKTDTKN (1428 aa)). 174 to 301 (IFGHFEKPIF…IRVIQVIMIR (128 aa)) lines the a nucleoside 3',5'-cyclic phosphate pocket. Disordered regions lie at residues 348–380 (ASRPVVRAPTSPNSRLSREEHTLSDPDPNPNAN) and 404–440 (SSAVSVNQAGTRRSSTTYGPSGESPNGNANTAPGTSI). Residues 413 to 440 (GTRRSSTTYGPSGESPNGNANTAPGTSI) show a composition bias toward polar residues. 2 positions are modified to phosphoserine: S418 and S424. A nucleoside 3',5'-cyclic phosphate contacts are provided by residues 456–585 (ELGL…VVRR) and 574–701 (IVLD…LSHR). Residues 927 to 1093 (LVLGGGGARG…VNNLPGHLWR (167 aa)) form the PNPLA domain. The GXGXXG signature appears at 931-936 (GGGARG). Positions 958-962 (GVSIG) match the GXSXG motif. The active-site Nucleophile is the S960. D1080 (proton acceptor) is an active-site residue. The DGA/G signature appears at 1080 to 1082 (DGG). S1174 carries the phosphoserine modification. The segment at 1349–1483 (DKATQSTPPT…ENLTKTDTKN (135 aa)) is disordered. The segment covering 1351–1373 (ATQSTPPTPNKQHALSPTSSQTN) has biased composition (polar residues). The span at 1382–1396 (KPKEKQPSYDKLDRE) shows a compositional bias: basic and acidic residues. Positions 1410-1419 (ERSSMQQRDS) are enriched in low complexity. Basic and acidic residues predominate over residues 1445–1458 (LNKPEQQPEQKPVP). Residues 1465–1474 (QKQQDQQQQE) are compositionally biased toward low complexity.

This sequence belongs to the NTE family. As to quaternary structure, interacts with Pka-C3; interaction inhibits the catalytic function of Pka-C3 and the esterase activity of sws.

It localises to the endoplasmic reticulum membrane. It carries out the reaction a 1-acyl-sn-glycero-3-phosphocholine + H2O = sn-glycerol 3-phosphocholine + a fatty acid + H(+). Its function is as follows. Phospholipase B that deacylates intracellular phosphatidylcholine (PtdCho), generating glycerophosphocholine (GroPtdCho). This deacylation occurs at both sn-2 and sn-1 positions of PtdCho. Its specific chemical modification by certain organophosphorus (OP) compounds leads to distal axonopathy. Plays a role in the signaling mechanism between neurons and glia that regulates glia wrapping during development of the adult brain. Essential for membrane lipid homeostasis and cell survival in both neurons and glia of the adult brain. This chain is Neuropathy target esterase sws, found in Drosophila virilis (Fruit fly).